We begin with the raw amino-acid sequence, 88 residues long: Small ribosomal subunit protein bS20 (88 aa).

Residues methionine 1–methionine 27 form a disordered region.

Belongs to the bacterial ribosomal protein bS20 family.

Binds directly to 16S ribosomal RNA. The protein is Small ribosomal subunit protein bS20 of Shewanella loihica (strain ATCC BAA-1088 / PV-4).